A 258-amino-acid polypeptide reads, in one-letter code: Small ribosomal subunit protein mS40 (258 aa).

Residues 1–35 (MAASVLNTVLRRLPMLSLFRGSHRVQVPLQTLCTK) constitute a mitochondrion transit peptide. 2 positions are modified to phosphoserine: Ser-38 and Ser-49. Positions 214–258 (SRLRRLYQGHLQEESGPPPESMPKMPPRTPAEASSTGQTGPQSAL) are disordered. Over residues 229–242 (GPPPESMPKMPPRT) the composition is skewed to pro residues. Residues 245–258 (EASSTGQTGPQSAL) show a composition bias toward polar residues.

The protein belongs to the bacterial ribosomal protein bS18 family. Mitochondrion-specific ribosomal protein mS40 subfamily. In terms of assembly, component of the mitochondrial small ribosomal subunit (mt-SSU). Mature mammalian 55S mitochondrial ribosomes consist of a small (28S) and a large (39S) subunit. The 28S small subunit contains a 12S ribosomal RNA (12S mt-rRNA) and 30 different proteins. The 39S large subunit contains a 16S rRNA (16S mt-rRNA), a copy of mitochondrial valine transfer RNA (mt-tRNA(Val)), which plays an integral structural role, and 52 different proteins. mS40 has a zinc binding site.

The protein resides in the mitochondrion. In Homo sapiens (Human), this protein is Small ribosomal subunit protein mS40 (MRPS18B).